The sequence spans 640 residues: Putative GTPase-activating protein C1620.12c (640 aa).

The disordered stretch occupies residues 96 to 120 (QPLQGHSPVPSFMSTASTNISSSKI). Residues 109-120 (STASTNISSSKI) show a composition bias toward low complexity. The Rab-GAP TBC domain maps to 215–408 (CIPSPCRKLV…RLMDLIAIYG (194 aa)). Residues 500–636 (RQNNLEELKN…LQTKWKSVSE (137 aa)) adopt a coiled-coil conformation.

This sequence belongs to the GYP5 family.

It is found in the nucleus. The protein resides in the cytoplasm. The sequence is that of Putative GTPase-activating protein C1620.12c from Schizosaccharomyces pombe (strain 972 / ATCC 24843) (Fission yeast).